Consider the following 563-residue polypeptide: Arginine--tRNA ligase (563 aa).

The 'HIGH' region motif lies at 120–130; that stretch reads PNIAKPFHIGH.

The protein belongs to the class-I aminoacyl-tRNA synthetase family. As to quaternary structure, monomer.

The protein localises to the cytoplasm. It catalyses the reaction tRNA(Arg) + L-arginine + ATP = L-arginyl-tRNA(Arg) + AMP + diphosphate. The sequence is that of Arginine--tRNA ligase from Clostridium botulinum (strain Okra / Type B1).